The primary structure comprises 236 residues: Small ribosomal subunit protein uS2c (236 aa).

The protein belongs to the universal ribosomal protein uS2 family.

The protein resides in the plastid. The protein localises to the chloroplast. This is Small ribosomal subunit protein uS2c (rps2) from Helianthus annuus (Common sunflower).